The primary structure comprises 131 residues: Glycine cleavage system H protein (131 aa).

A Lipoyl-binding domain is found at 24–106; the sequence is RAIVGISDHA…YGEGWIMVIE (83 aa). K65 carries the post-translational modification N6-lipoyllysine.

It belongs to the GcvH family. As to quaternary structure, the glycine cleavage system is composed of four proteins: P, T, L and H. (R)-lipoate is required as a cofactor.

The glycine cleavage system catalyzes the degradation of glycine. The H protein shuttles the methylamine group of glycine from the P protein to the T protein. The chain is Glycine cleavage system H protein from Xylella fastidiosa (strain 9a5c).